Here is a 342-residue protein sequence, read N- to C-terminus: Methylthioribose-1-phosphate isomerase (342 aa).

Substrate is bound by residues 44–46 (RGA), Arg-85, and Gln-192. The Proton donor role is filled by Asp-233. 243 to 244 (NK) provides a ligand contact to substrate.

This sequence belongs to the eIF-2B alpha/beta/delta subunits family. MtnA subfamily.

It carries out the reaction 5-(methylsulfanyl)-alpha-D-ribose 1-phosphate = 5-(methylsulfanyl)-D-ribulose 1-phosphate. It functions in the pathway amino-acid biosynthesis; L-methionine biosynthesis via salvage pathway; L-methionine from S-methyl-5-thio-alpha-D-ribose 1-phosphate: step 1/6. Functionally, catalyzes the interconversion of methylthioribose-1-phosphate (MTR-1-P) into methylthioribulose-1-phosphate (MTRu-1-P). The polypeptide is Methylthioribose-1-phosphate isomerase (Caldicellulosiruptor saccharolyticus (strain ATCC 43494 / DSM 8903 / Tp8T 6331)).